Here is a 346-residue protein sequence, read N- to C-terminus: Actin-like protein 10 (346 aa).

Belongs to the actin family.

The chain is Actin-like protein 10 (Actl10) from Mus musculus (Mouse).